Consider the following 393-residue polypeptide: Protein DDI1 homolog 2 (393 aa).

Positions 1–81 constitute a Ubiquitin-like domain; sequence MLITVYCVRR…VILRQKEAPE (81 aa). Positions 82-127 are disordered; that stretch reads TRPAAPFPGLDFSTIAVPGASSQPDPSQPQAPPPPPDTSSFPQGLD. Residues 107-118 show a composition bias toward pro residues; the sequence is PSQPQAPPPPPD. D246 is a catalytic residue. The short motif at 370–389 is the Ubiquitin-binding element; that stretch reads EEIADRELAEVLQKSADEAD.

It belongs to the DDI1 family. Homodimer.

Its subcellular location is the cytoplasm. The protein resides in the cytosol. The protein localises to the chromosome. Functionally, aspartic protease that mediates the cleavage of NFE2L1/NRF1 at 'Leu-104', thereby promoting release of NFE2L1/NRF1 from the endoplasmic reticulum membrane. Ubiquitination of NFE2L1/NRF1 is a prerequisite for cleavage, suggesting that DDI2 specifically recognizes and binds ubiquitinated NFE2L1/NRF1. Seems to act as a proteasomal shuttle which links the proteasome and replication fork proteins like RTF2. Required for cellular survival following replication stress. The sequence is that of Protein DDI1 homolog 2 (ddi2) from Xenopus laevis (African clawed frog).